A 397-amino-acid chain; its full sequence is Putative nickel insertion protein (397 aa).

It belongs to the LarC family.

In Synechococcus sp. (strain JA-3-3Ab) (Cyanobacteria bacterium Yellowstone A-Prime), this protein is Putative nickel insertion protein.